A 259-amino-acid chain; its full sequence is Transmembrane protein 81 (259 aa).

An N-terminal signal peptide occupies residues Met-1–Ser-18. Over Asp-19 to Asn-221 the chain is Extracellular. The 76-residue stretch at Gly-97 to Lys-172 folds into the Ig-like domain. The cysteines at positions 104 and 161 are disulfide-linked. The helical transmembrane segment at Ile-222–Phe-242 threads the bilayer. At Cys-243 to Ile-259 the chain is on the cytoplasmic side.

Forms a complex with izumo1 and spaca6 on spermatocyte cell membrane. The complex binds to oocyte protein bncr. As to expression, expressed in sperm.

The protein localises to the cell membrane. Essential fertilization factor required for male fertility. Part of a conserved trimeric sperm complex with the essential fertilization factors IZUMO1 and SPACA6 which bridges sperm and oocyte membranes during fertilization by binding to IZUMO1R/JUNO on the oocyte. The protein is Transmembrane protein 81 of Danio rerio (Zebrafish).